The chain runs to 217 residues: Small ribosomal subunit protein uS3c (217 aa).

Residues 39–109 (IRNFLRTKLI…RFRITITYIP (71 aa)) form the KH type-2 domain.

The protein belongs to the universal ribosomal protein uS3 family. Part of the 30S ribosomal subunit.

It is found in the plastid. The protein resides in the chloroplast. This is Small ribosomal subunit protein uS3c (rps3) from Chlorokybus atmophyticus (Soil alga).